The chain runs to 674 residues: CLK4-associating serine/arginine rich protein (674 aa).

Serine 101 carries the phosphoserine modification. Disordered stretches follow at residues 171–232 (TVAE…GMAD) and 258–674 (EKAM…HYRH). Residues 182 to 214 (PEEEESAAEEESNSDEDEVIPDIDVEVDVDELN) show a composition bias toward acidic residues. A compositionally biased stretch (basic residues) spans 265 to 283 (RRSRRQRREFREKRLRGRK). Phosphoserine occurs at positions 285 and 294. Over residues 290–313 (ARRDSPTYDPYKRSPSESSSESRS) the composition is skewed to basic and acidic residues. Threonine 327 carries the phosphothreonine modification. Phosphoserine is present on residues serine 331 and serine 335. Residues 356–365 (PPAPPQPGGP) show a composition bias toward pro residues. Over residues 378 to 399 (SSSSSSSSASRTSSSRSSSRSS) the composition is skewed to low complexity. 2 stretches are compositionally biased toward basic residues: residues 411-443 (SGRHARSRSRSWSRSRSRSRRYSRSRSRGRRHS) and 481-492 (RGGRGLRHHSSS). Low complexity-rich tracts occupy residues 493-506 (RSRSSWSLSPSRSR) and 514-532 (HSPSPSQSRSRSRSRSQSP). Position 547 is a phosphoserine (serine 547). A Phosphothreonine modification is found at threonine 573. A coiled-coil region spans residues 585 to 647 (ALNRQFKADK…ERQYSRQSRS (63 aa)). Composition is skewed to basic and acidic residues over residues 590-617 (FKADKKAAQEKMIQQEHERQEREDELRA) and 625-641 (KERERREKEREEWERQY). Low complexity predominate over residues 642-651 (SRQSRSPSPR). The segment covering 659–674 (SRRRSRSRSRSPHYRH) has biased composition (basic residues).

The protein belongs to the splicing factor SR family. As to quaternary structure, probably interacts with CLK4. In terms of processing, phosphorylated in vitro by CLK4.

It is found in the nucleus. Probably functions as an alternative splicing regulator. May regulate the mRNA splicing of genes such as CLK1. May act by regulating members of the CLK kinase family. This Homo sapiens (Human) protein is CLK4-associating serine/arginine rich protein (CLASRP).